Consider the following 287-residue polypeptide: Proline iminopeptidase (287 aa).

An AB hydrolase-1 domain is found at 22 to 271 (PLVLLHGGPG…RSRHMAFIDE (250 aa)). The active-site Nucleophile is the S98. D238 is a catalytic residue. The active-site Proton donor is the H265.

It belongs to the peptidase S33 family.

It localises to the cell envelope. It carries out the reaction Release of N-terminal proline from a peptide.. In terms of biological role, releases the N-terminal proline from various substrates. The protein is Proline iminopeptidase of Lactiplantibacillus plantarum (strain ATCC BAA-793 / NCIMB 8826 / WCFS1) (Lactobacillus plantarum).